Reading from the N-terminus, the 302-residue chain is uncharacterized protein (302 aa).

2 disordered regions span residues 1 to 167 (MPCR…QSSE) and 180 to 199 (PSLCPSQTGTASTASPQRAS). Basic and acidic residues predominate over residues 39–54 (EESHAPSRDPRDHQGS). Polar residues-rich tracts occupy residues 123–133 (LSTSSCASVSR) and 183–197 (CPSQTGTASTASPQR).

This is an uncharacterized protein from Homo sapiens (Human).